We begin with the raw amino-acid sequence, 166 residues long: Small ribosomal subunit protein uS5 (166 aa).

The S5 DRBM domain occupies 11–74 (LQEKLIAVNR…EQAKRNLSKV (64 aa)).

It belongs to the universal ribosomal protein uS5 family. Part of the 30S ribosomal subunit. Contacts proteins S4 and S8.

In terms of biological role, with S4 and S12 plays an important role in translational accuracy. Its function is as follows. Located at the back of the 30S subunit body where it stabilizes the conformation of the head with respect to the body. The chain is Small ribosomal subunit protein uS5 from Aeromonas salmonicida (strain A449).